Here is a 71-residue protein sequence, read N- to C-terminus: Long neurotoxin 5 (71 aa).

5 disulfide bridges follow: cysteine 3–cysteine 20, cysteine 14–cysteine 41, cysteine 26–cysteine 30, cysteine 45–cysteine 56, and cysteine 57–cysteine 62.

This sequence belongs to the three-finger toxin family. Long-chain subfamily. Type II alpha-neurotoxin sub-subfamily. In terms of tissue distribution, expressed by the venom gland.

The protein resides in the secreted. Its function is as follows. Binds with high affinity to muscular (alpha-1/CHRNA1) and neuronal (alpha-7/CHRNA7) nicotinic acetylcholine receptor (nAChR) and inhibits acetylcholine from binding to the receptor, thereby impairing neuromuscular and neuronal transmission. The polypeptide is Long neurotoxin 5 (Naja naja (Indian cobra)).